A 234-amino-acid polypeptide reads, in one-letter code: Probable chemoreceptor glutamine deamidase CheD 1 (234 aa).

This sequence belongs to the CheD family.

The enzyme catalyses L-glutaminyl-[protein] + H2O = L-glutamyl-[protein] + NH4(+). In terms of biological role, probably deamidates glutamine residues to glutamate on methyl-accepting chemotaxis receptors (MCPs), playing an important role in chemotaxis. This chain is Probable chemoreceptor glutamine deamidase CheD 1, found in Albidiferax ferrireducens (strain ATCC BAA-621 / DSM 15236 / T118) (Rhodoferax ferrireducens).